The chain runs to 383 residues: GTP-binding protein 10 homolog (383 aa).

The region spanning 22-157 (PSFLDTLRLA…RIVNLDLKLI (136 aa)) is the Obg domain. One can recognise an OBG-type G domain in the interval 158–353 (ADVGLVGFPN…VKSQLRRTLV (196 aa)). GTP-binding positions include 164 to 171 (GFPNAGKS), 211 to 215 (DLPGL), and 287 to 290 (NKMD).

Belongs to the TRAFAC class OBG-HflX-like GTPase superfamily. OBG GTPase family.

The protein localises to the nucleus. It is found in the nucleolus. May be involved in the ribosome maturation process. This Drosophila pseudoobscura pseudoobscura (Fruit fly) protein is GTP-binding protein 10 homolog.